We begin with the raw amino-acid sequence, 154 residues long: Host transcription reprogramming factor 5 (154 aa).

The signal sequence occupies residues 1–19; it reads MQILRIAQLMALLATCASA. The segment at 24–85 is disordered; it reads TGSRVYSRDV…KRIKAEQNAR (62 aa). The segment covering 35-50 has biased composition (polar residues); the sequence is QTQGGFSGSPTTNSPD. Positions 69–85 are enriched in basic and acidic residues; the sequence is ETEKERKKRIKAEQNAR. A C2H2-type; degenerate zinc finger spans residues 96 to 121; sequence YQCPYCSDPTVFSHSDALGRHIYTIH.

It is found in the secreted. Its subcellular location is the host nucleus. Its function is as follows. Probable secreted effector that translocates into the nuclei of host cells to reprogram the expression of targeted genes by binding on effector binding elements in rice. This chain is Host transcription reprogramming factor 5, found in Pyricularia oryzae (strain 70-15 / ATCC MYA-4617 / FGSC 8958) (Rice blast fungus).